The chain runs to 316 residues: Cuticle collagen 7 (316 aa).

A signal peptide spans 1–34 (MSSATFLSVMAGLSGIVVFGALISVFHIYSDINS). Disordered regions lie at residues 78 to 269 (KQSQ…DAAY) and 281 to 316 (HRNV…HVQA). Positions 79–90 (QSQCNCGQQASN) are enriched in polar residues. Triple-helical region regions lie at residues 94 to 126 (GPPG…AGPS), 139 to 198 (GLPG…PGKS), and 204 to 263 (GLPG…DGTP). Low complexity-rich tracts occupy residues 110 to 125 (QPGQ…VAGP), 137 to 147 (PQGLPGPAGVP), and 177 to 198 (AGSA…PGKS). Residues 209-221 (SGAPGPQGPPGAP) show a composition bias toward pro residues. The segment covering 241–260 (PNGQPGHPGQDGQPGAPGND) has biased composition (low complexity).

Belongs to the cuticular collagen family. As to quaternary structure, collagen polypeptide chains are complexed within the cuticle by disulfide bonds and other types of covalent cross-links.

Nematode cuticles are composed largely of collagen-like proteins. The cuticle functions both as an exoskeleton and as a barrier to protect the worm from its environment. In Caenorhabditis elegans, this protein is Cuticle collagen 7 (col-7).